A 366-amino-acid chain; its full sequence is 3-dehydroquinate synthase (366 aa).

Residues 69-74 (DGEAHK), 103-107 (GVIGD), 127-128 (TT), Lys-140, Lys-149, and 167-170 (TLNT) each bind NAD(+). The Zn(2+) site is built by Glu-182, His-245, and His-262.

This sequence belongs to the sugar phosphate cyclases superfamily. Dehydroquinate synthase family. The cofactor is Co(2+). It depends on Zn(2+) as a cofactor. NAD(+) serves as cofactor.

It localises to the cytoplasm. It carries out the reaction 7-phospho-2-dehydro-3-deoxy-D-arabino-heptonate = 3-dehydroquinate + phosphate. Its pathway is metabolic intermediate biosynthesis; chorismate biosynthesis; chorismate from D-erythrose 4-phosphate and phosphoenolpyruvate: step 2/7. Its function is as follows. Catalyzes the conversion of 3-deoxy-D-arabino-heptulosonate 7-phosphate (DAHP) to dehydroquinate (DHQ). This is 3-dehydroquinate synthase from Pseudomonas fluorescens (strain SBW25).